Here is a 142-residue protein sequence, read N- to C-terminus: Large ribosomal subunit protein uL13 (142 aa).

The protein belongs to the universal ribosomal protein uL13 family. Part of the 50S ribosomal subunit.

Functionally, this protein is one of the early assembly proteins of the 50S ribosomal subunit, although it is not seen to bind rRNA by itself. It is important during the early stages of 50S assembly. The sequence is that of Large ribosomal subunit protein uL13 from Koribacter versatilis (strain Ellin345).